The chain runs to 292 residues: Ribosomal protein L11 methyltransferase (292 aa).

S-adenosyl-L-methionine contacts are provided by Thr144, Gly165, Asp187, and Asn229.

This sequence belongs to the methyltransferase superfamily. PrmA family.

The protein localises to the cytoplasm. It catalyses the reaction L-lysyl-[protein] + 3 S-adenosyl-L-methionine = N(6),N(6),N(6)-trimethyl-L-lysyl-[protein] + 3 S-adenosyl-L-homocysteine + 3 H(+). Its function is as follows. Methylates ribosomal protein L11. The sequence is that of Ribosomal protein L11 methyltransferase from Pseudomonas syringae pv. tomato (strain ATCC BAA-871 / DC3000).